We begin with the raw amino-acid sequence, 415 residues long: Sucrose permease (415 aa).

The Cytoplasmic segment spans residues 1–16 (MALNIPFRNAYYRFAS). The chain crosses the membrane as a helical span at residues 17 to 37 (SYSFLFFISWSLWWSLYAIWL). Over 38-48 (KGHLGLTGTEL) the chain is Periplasmic. A helical membrane pass occupies residues 49-69 (GTLYSVNQFTSILFMMFYGIV). Residues 70-77 (QDKLGLKK) lie on the Cytoplasmic side of the membrane. Residues 78 to 98 (PLIWCMSFILVLTGPFMIYVY) form a helical membrane-spanning segment. Residues 99-107 (EPLLQSNFS) are Periplasmic-facing. The chain crosses the membrane as a helical span at residues 108–128 (VGLILGALFFGLGYLAGCGLL). The Cytoplasmic portion of the chain corresponds to 129 to 147 (DSFTEKMARNFHFEYGTAR). The chain crosses the membrane as a helical span at residues 148-167 (AWGSFGYAIGAFFAGIFFSI). Topologically, residues 168 to 170 (SPH) are periplasmic. A helical transmembrane segment spans residues 171–190 (INFWLVSLFGAVFMMINMRF). At 191–220 (KDKDHQCIAADAGGVKKEDFIAVFKDRNFW) the chain is on the cytoplasmic side. Residues 221-241 (VFVIFIVGTWSFYNIFDQQLF) traverse the membrane as a helical segment. Residues 242 to 260 (PVFYAGLFESHDVGTRLYG) are Periplasmic-facing. A helical transmembrane segment spans residues 261–281 (YLNSFQVVLEALCMAIIPFFV). Residues 282 to 287 (NRVGPK) lie on the Cytoplasmic side of the membrane. The chain crosses the membrane as a helical span at residues 288–308 (NALLIGVVIMALRILSCALFV). Topologically, residues 309–311 (NPW) are periplasmic. The chain crosses the membrane as a helical span at residues 312-332 (IISLVKLLHAIEVPLCVISVF). The Cytoplasmic portion of the chain corresponds to 333–342 (KYSVANFDKR). The chain crosses the membrane as a helical span at residues 343-363 (LSSTIFLIGFQIASSLGIVLL). Topologically, residues 364 to 377 (STPTGILFDHAGYQ) are periplasmic. A helical membrane pass occupies residues 378 to 398 (TVFFAISGIVCLMLLFGIFFL). At 399-415 (SKKREQIVMETPVPSAI) the chain is on the cytoplasmic side.

The protein belongs to the major facilitator superfamily. Oligosaccharide:H(+) symporter (OHS) (TC 2.A.1.5) family.

It localises to the cell inner membrane. It functions in the pathway glycan biosynthesis; sucrose metabolism. Functionally, responsible for transport of sucrose into the cell, with the concomitant import of a proton (symport system). Can also transport maltose, fructose or lactulose, but not glucose, lactose or melibiose. The substrate specificity is directed toward the fructofuranosyl moiety of the substrate. This Escherichia coli protein is Sucrose permease.